A 155-amino-acid polypeptide reads, in one-letter code: Large ribosomal subunit protein uL16 (155 aa).

The disordered stretch occupies residues 1–22; the sequence is MLSPKRTKYRKQQRGRMKGKAT.

It belongs to the universal ribosomal protein uL16 family. Part of the 50S ribosomal subunit.

Its function is as follows. Binds 23S rRNA and is also seen to make contacts with the A and possibly P site tRNAs. The polypeptide is Large ribosomal subunit protein uL16 (Synechococcus sp. (strain JA-2-3B'a(2-13)) (Cyanobacteria bacterium Yellowstone B-Prime)).